The primary structure comprises 684 residues: UvrABC system protein C (684 aa).

The GIY-YIG domain maps to 16–95; it reads TDPGVYKFRD…IKRFDPRFNV (80 aa). The region spanning 208–243 is the UVR domain; that stretch reads APVRKRVTQRMEEAAENLEFELAARLRDDLGAIDKL. Residues 332 to 352 show a composition bias toward basic and acidic residues; the sequence is EAAEDAKLERRGVDQESHAEP. The interval 332 to 357 is disordered; that stretch reads EAAEDAKLERRGVDQESHAEPRQGNA.

This sequence belongs to the UvrC family. In terms of assembly, interacts with UvrB in an incision complex.

Its subcellular location is the cytoplasm. The UvrABC repair system catalyzes the recognition and processing of DNA lesions. UvrC both incises the 5' and 3' sides of the lesion. The N-terminal half is responsible for the 3' incision and the C-terminal half is responsible for the 5' incision. The sequence is that of UvrABC system protein C from Corynebacterium aurimucosum (strain ATCC 700975 / DSM 44827 / CIP 107346 / CN-1) (Corynebacterium nigricans).